The sequence spans 136 residues: Ubiquinol-cytochrome c reductase complex assembly factor 2 (136 aa).

Residues 1-13 (MAALRYRRFLKLC) constitute a mitochondrion transit peptide.

In terms of assembly, interacts with UQCC1. Forms a complex, named COMB/coordinator of mitochondrial CYTB biogenesis, composed of UQCC1, UQCC2, UQCC4, UQCC5 and UQCC6; stabilizes nascent cytochrome b/MT-CYB and promotes its membrane insertion. Forms a complex, named COMA, composed of UQCC1, UQCC2 and UQCC4; activates MT-CYB translation. Forms a complex, named COMC, composed of UQCC1, UQCC2; UQCC3 and UQCC4; mediates MT-CYB hemylation and association with the first nuclear-encoded CIII subunit UQCRQ. In terms of tissue distribution, widely expressed with highest levels in brain, liver, kidney, heart, skeletal muscle, thymus, testis and pancreas (at protein level).

The protein localises to the mitochondrion matrix. The protein resides in the mitochondrion nucleoid. It localises to the mitochondrion. Its subcellular location is the mitochondrion intermembrane space. It is found in the mitochondrion inner membrane. Its function is as follows. Required for the assembly of the ubiquinol-cytochrome c reductase complex (mitochondrial respiratory chain complex III or cytochrome b-c1 complex). Plays a role in the modulation of respiratory chain activities such as oxygen consumption and ATP production and via its modulation of the respiratory chain activity can regulate skeletal muscle differentiation and insulin secretion by pancreatic beta-cells. Involved in cytochrome b translation and/or stability. The protein is Ubiquinol-cytochrome c reductase complex assembly factor 2 (Uqcc2) of Mus musculus (Mouse).